The following is a 311-amino-acid chain: Glycosyltransferase 6 domain-containing protein 1 (311 aa).

Over 1–5 (MKAKR) the chain is Cytoplasmic. The helical; Signal-anchor for type II membrane protein transmembrane segment at 6–26 (RILLQLLTFCLFLLLLAKIHF) threads the bilayer. Topologically, residues 27–311 (RNHQEEELLL…KIAHHPIDTL (285 aa)) are lumenal. A glycan (N-linked (GlcNAc...) asparagine) is linked at N77. Substrate contacts are provided by residues 85-90 (FAVGSL), 176-178 (NIN), and 198-201 (HPWW). The active-site Nucleophile is E266.

The protein belongs to the glycosyltransferase 6 family. The cofactor is Mn(2+).

It localises to the membrane. The chain is Glycosyltransferase 6 domain-containing protein 1 (Glt6d1) from Mus musculus (Mouse).